A 313-amino-acid polypeptide reads, in one-letter code: Transcription factor MafB (313 aa).

Disordered stretches follow at residues 51-77 (QPTGSVSSTPISTPCSSVPSSPSFSPT) and 151-197 (MGLP…VEDR). The span at 55-76 (SVSSTPISTPCSSVPSSPSFSP) shows a compositional bias: low complexity. The span at 154–166 (PHHHPHHHQHQHH) shows a compositional bias: basic residues. Residues 167–192 (QTSPSPSGSSSSSQQLHHQQQHSSSS) are compositionally biased toward low complexity. A basic motif region spans residues 225–250 (RLKQKRRTLKNRGYAQSCRYKRVQQK). The bZIP domain maps to 225 to 288 (RLKQKRRTLK…DAYKIKCEKL (64 aa)). Residues 253 to 274 (LEGEKTQLVQQVEQLKQEVSRL) are leucine-zipper. Positions 292–313 (NSSNFREAGSTSDNPSSPEFFM) are disordered.

Belongs to the bZIP family. Maf subfamily. In terms of assembly, homodimer or heterodimer with other bHLH-Zip transcription factors. Binds DNA as a homodimer or a heterodimer.

The protein resides in the nucleus. In terms of biological role, acts as a transcriptional activator or repressor. Implicated in the regulation of cell-type specific gene expression and play a role in inductive events during lens development. The sequence is that of Transcription factor MafB (mafb) from Xenopus laevis (African clawed frog).